Here is an 89-residue protein sequence, read N- to C-terminus: Large ribosomal subunit protein bL27 (89 aa).

The tract at residues 1–20 (MAHKKAGGSSRNGRDSAGKR) is disordered.

It belongs to the bacterial ribosomal protein bL27 family.

In Rhodopseudomonas palustris (strain HaA2), this protein is Large ribosomal subunit protein bL27.